A 179-amino-acid polypeptide reads, in one-letter code: Endoribonuclease YbeY (179 aa).

H148, H152, and H158 together coordinate Zn(2+).

The protein belongs to the endoribonuclease YbeY family. Zn(2+) serves as cofactor.

The protein resides in the cytoplasm. Single strand-specific metallo-endoribonuclease involved in late-stage 70S ribosome quality control and in maturation of the 3' terminus of the 16S rRNA. This chain is Endoribonuclease YbeY, found in Prochlorococcus marinus (strain MIT 9312).